The chain runs to 230 residues: Large ribosomal subunit protein uL1 (230 aa).

This sequence belongs to the universal ribosomal protein uL1 family. In terms of assembly, part of the 50S ribosomal subunit.

Binds directly to 23S rRNA. The L1 stalk is quite mobile in the ribosome, and is involved in E site tRNA release. Functionally, protein L1 is also a translational repressor protein, it controls the translation of the L11 operon by binding to its mRNA. This chain is Large ribosomal subunit protein uL1, found in Desulforapulum autotrophicum (strain ATCC 43914 / DSM 3382 / VKM B-1955 / HRM2) (Desulfobacterium autotrophicum).